Consider the following 259-residue polypeptide: 3-oxo-5-alpha-steroid 4-dehydrogenase 1 (259 aa).

The next 5 membrane-spanning stretches (helical) occupy residues 10 to 30 (LCLL…SIVG), 86 to 106 (VLLA…PVLI), 111 to 131 (PTLL…GYVQ), 146 to 166 (VTHP…VINI), and 206 to 226 (WCGF…LFTL).

It belongs to the steroid 5-alpha reductase family. In terms of tissue distribution, liver and prostate (at a low level).

Its subcellular location is the microsome membrane. The protein localises to the endoplasmic reticulum membrane. The catalysed reaction is a 3-oxo-5alpha-steroid + NADP(+) = a 3-oxo-Delta(4)-steroid + NADPH + H(+). The enzyme catalyses 5alpha-pregnane-3,20-dione + NADP(+) = progesterone + NADPH + H(+). It catalyses the reaction 17beta-hydroxy-5alpha-androstan-3-one + NADP(+) = testosterone + NADPH + H(+). It carries out the reaction androst-4-ene-3,17-dione + NADPH + H(+) = 5alpha-androstan-3,17-dione + NADP(+). Its function is as follows. Converts testosterone into 5-alpha-dihydrotestosterone and progesterone or corticosterone into their corresponding 5-alpha-3-oxosteroids. It plays a central role in sexual differentiation and androgen physiology. This chain is 3-oxo-5-alpha-steroid 4-dehydrogenase 1, found in Rattus norvegicus (Rat).